The following is a 729-amino-acid chain: Beta-galactosidase 4 (729 aa).

An N-terminal signal peptide occupies residues 1–35 (MAPAPTPAAAAGRRVAVLAAALVAASLAASVGVAN). Catalysis depends on glutamate 194, which acts as the Proton donor. The active-site Nucleophile is the glutamate 263.

Belongs to the glycosyl hydrolase 35 family.

Its subcellular location is the secreted. It is found in the extracellular space. The protein localises to the apoplast. It catalyses the reaction Hydrolysis of terminal non-reducing beta-D-galactose residues in beta-D-galactosides.. The protein is Beta-galactosidase 4 of Oryza sativa subsp. japonica (Rice).